The sequence spans 374 residues: UDP-N-acetylglucosamine--N-acetylmuramyl-(pentapeptide) pyrophosphoryl-undecaprenol N-acetylglucosamine transferase (374 aa).

Residues 13–15 (TGG), asparagine 124, arginine 165, serine 193, and glutamine 294 contribute to the UDP-N-acetyl-alpha-D-glucosamine site.

Belongs to the glycosyltransferase 28 family. MurG subfamily.

The protein localises to the cell inner membrane. The catalysed reaction is di-trans,octa-cis-undecaprenyl diphospho-N-acetyl-alpha-D-muramoyl-L-alanyl-D-glutamyl-meso-2,6-diaminopimeloyl-D-alanyl-D-alanine + UDP-N-acetyl-alpha-D-glucosamine = di-trans,octa-cis-undecaprenyl diphospho-[N-acetyl-alpha-D-glucosaminyl-(1-&gt;4)]-N-acetyl-alpha-D-muramoyl-L-alanyl-D-glutamyl-meso-2,6-diaminopimeloyl-D-alanyl-D-alanine + UDP + H(+). Its pathway is cell wall biogenesis; peptidoglycan biosynthesis. Its function is as follows. Cell wall formation. Catalyzes the transfer of a GlcNAc subunit on undecaprenyl-pyrophosphoryl-MurNAc-pentapeptide (lipid intermediate I) to form undecaprenyl-pyrophosphoryl-MurNAc-(pentapeptide)GlcNAc (lipid intermediate II). This Rhizobium meliloti (strain 1021) (Ensifer meliloti) protein is UDP-N-acetylglucosamine--N-acetylmuramyl-(pentapeptide) pyrophosphoryl-undecaprenol N-acetylglucosamine transferase.